The chain runs to 69 residues: Cytochrome c oxidase copper chaperone (69 aa).

Positions 23 and 24 each coordinate Cu cation. Residues cysteine 23–valine 65 enclose the CHCH domain. 2 short sequence motifs (cx9C motif) span residues cysteine 26–cysteine 36 and cysteine 47–cysteine 57. 2 cysteine pairs are disulfide-bonded: cysteine 26/cysteine 57 and cysteine 36/cysteine 47.

The protein belongs to the COX17 family.

It localises to the mitochondrion intermembrane space. In terms of biological role, copper chaperone for cytochrome c oxidase (COX). Binds two copper ions and deliver them to the Cu(A) site of COX. The polypeptide is Cytochrome c oxidase copper chaperone (COX17) (Saccharomyces cerevisiae (strain ATCC 204508 / S288c) (Baker's yeast)).